A 297-amino-acid chain; its full sequence is HTH-type transcriptional regulator PerR (297 aa).

The region spanning 7–64 (APLNLLRAFEAAGRTGAFALAASELELSPSAISHAIRKLENLLDVRLFQRSTREITLT) is the HTH lysR-type domain. The H-T-H motif DNA-binding region spans 24–44 (FALAASELELSPSAISHAIRK).

The protein belongs to the LysR transcriptional regulatory family.

Functionally, apparent regulatory gene involved in peroxide resistance in stationary phase. The chain is HTH-type transcriptional regulator PerR (perR) from Escherichia coli (strain K12).